The chain runs to 415 residues: Carboxypeptidase G2 (415 aa).

A signal peptide spans 1–22 (MRPSIHRTAIAAVLATAFVAGT). His-112 contributes to the Zn(2+) binding site. Asp-114 is an active-site residue. Residue Asp-141 participates in Zn(2+) binding. Catalysis depends on Glu-175, which acts as the Proton acceptor. Zn(2+) contacts are provided by Glu-176, Glu-200, and His-385.

Belongs to the peptidase M20A family. Homodimer. The cofactor is Zn(2+).

The catalysed reaction is Release of C-terminal glutamate residues from a wide range of N-acylating moieties, including peptidyl, aminoacyl, benzoyl, benzyloxycarbonyl, folyl and pteroyl groups.. Its function is as follows. Catalyzes the hydrolysis of reduced and non-reduced folates to pteroates and L-glutamate. This enzyme has a broad specificity. This is Carboxypeptidase G2 (cpg2) from Pseudomonas sp. (strain RS-16).